Here is a 364-residue protein sequence, read N- to C-terminus: DNA replication and repair protein RecF (364 aa).

G30 to T37 is a binding site for ATP.

Belongs to the RecF family.

It localises to the cytoplasm. Its function is as follows. The RecF protein is involved in DNA metabolism; it is required for DNA replication and normal SOS inducibility. RecF binds preferentially to single-stranded, linear DNA. It also seems to bind ATP. This is DNA replication and repair protein RecF from Porphyromonas gingivalis (strain ATCC 33277 / DSM 20709 / CIP 103683 / JCM 12257 / NCTC 11834 / 2561).